The sequence spans 258 residues: Serine protease VLSP-3 (258 aa).

Positions 1-18 (MVLIRVLANLLVLQLSYA) are cleaved as a signal peptide. The propeptide occupies 19 to 24 (QKSSEL). The 225-residue stretch at 25–249 (VIGGDECNIN…YTDWIQSIIA (225 aa)) folds into the Peptidase S1 domain. 6 cysteine pairs are disulfide-bonded: C31–C163, C50–C66, C98–C256, C142–C210, C174–C189, and C200–C225. N44 carries an N-linked (GlcNAc...) asparagine glycan. The active-site Charge relay system is the H65. N-linked (GlcNAc...) asparagine glycans are attached at residues N79 and N103. The active-site Charge relay system is the D110. N-linked (GlcNAc...) asparagine glycosylation is found at N154 and N170. S204 functions as the Charge relay system in the catalytic mechanism. Residue N251 is glycosylated (N-linked (GlcNAc...) asparagine).

Belongs to the peptidase S1 family. Snake venom subfamily. Monomer. Expressed by the venom gland.

The protein localises to the secreted. In terms of biological role, snake venom serine protease that may act in the hemostasis system of the prey. The sequence is that of Serine protease VLSP-3 from Macrovipera lebetinus (Levantine viper).